The chain runs to 209 residues: Octanoyltransferase (209 aa).

Residues 30-209 (GEAPEAVYLV…LEVEFIKIFK (180 aa)) form the BPL/LPL catalytic domain. Substrate-binding positions include 69 to 76 (RGGKFTFH), 143 to 145 (AIG), and 156 to 158 (GIA). Cys-174 serves as the catalytic Acyl-thioester intermediate.

Belongs to the LipB family.

The protein resides in the cytoplasm. The enzyme catalyses octanoyl-[ACP] + L-lysyl-[protein] = N(6)-octanoyl-L-lysyl-[protein] + holo-[ACP] + H(+). It functions in the pathway protein modification; protein lipoylation via endogenous pathway; protein N(6)-(lipoyl)lysine from octanoyl-[acyl-carrier-protein]: step 1/2. Its function is as follows. Catalyzes the transfer of endogenously produced octanoic acid from octanoyl-acyl-carrier-protein onto the lipoyl domains of lipoate-dependent enzymes. Lipoyl-ACP can also act as a substrate although octanoyl-ACP is likely to be the physiological substrate. The polypeptide is Octanoyltransferase (Rickettsia bellii (strain OSU 85-389)).